Consider the following 996-residue polypeptide: Oxysterol-binding protein homolog 3 (996 aa).

The segment at 1-183 (METIDIQNRS…KKKILFNASV (183 aa)) is GOLD domain. The interval 75–114 (GSSSNIEEHHRRSSQHSHSSSNGSDNKRKERSYSSLSISG) is disordered. Phosphoserine occurs at positions 190 and 193. Thr210 bears the Phosphothreonine mark. Residues 221 to 315 (GRYLQGYLLK…WVDALQTCFD (95 aa)) form the PH domain. Thr323 is subject to Phosphothreonine. Ser324 carries the phosphoserine modification. Residues Thr325 and Thr352 each carry the phosphothreonine modification. The tract at residues 338–372 (EVINKSSPQDHDHLTPTATTKSALSHRQHTQKDMD) is disordered. An FFAT motif is present at residues 514–520 (EFFDAEE). The tract at residues 556 to 611 (KEVQLSGSEQIASSSVESYTTNDENHSRKHLKNRHKNRRRGHPHHQKTKSAQSSTE) is disordered. Positions 558–577 (VQLSGSEQIASSSVESYTTN) are enriched in polar residues. Positions 582-603 (SRKHLKNRHKNRRRGHPHHQKT) are enriched in basic residues. Phosphoserine is present on Ser605. Positions 642 to 982 (SLLSFLRKNV…YITGPKSYWE (341 aa)) are OSBP-related domain (ORD). Residues 657 to 660 (SIAM), Lys717, 745 to 746 (HR), and 945 to 949 (EQLQR) contribute to the a 1,2-diacyl-sn-glycero-3-phospho-(1D-myo-inositol 4-phosphate) site.

This sequence belongs to the OSBP family. Interacts with SCS2.

It localises to the cytoplasm. The protein localises to the endoplasmic reticulum membrane. Its function is as follows. Lipid transport protein (LTP) involved in non-vesicular transfer of lipids between membranes. Functions in phosphoinositide-coupled directional transport of various lipids by carrying the lipid molecule in a hydrophobic pocket and transferring it between membranes through the cytosol. Involved in maintenance of intracellular sterol distribution and homeostasis. May serve as a sensor of PI4P levels at PM-ER membrane contact site, regulating PI4P phosphatase SAC1 activity. May be involved in ergosterol transport from the plasma membrane (PM) to the ER, however it does not bind sterols directly. Plays a role in the positive regulation of vesicular transport of ceramide from the ER to the Golgi, negatively regulating COPII-mediated ER export of cargos. The protein is Oxysterol-binding protein homolog 3 of Saccharomyces cerevisiae (strain ATCC 204508 / S288c) (Baker's yeast).